Consider the following 427-residue polypeptide: 3-phosphoshikimate 1-carboxyvinyltransferase (427 aa).

Residues Lys20, Ser21, and Arg25 each contribute to the 3-phosphoshikimate site. Phosphoenolpyruvate is bound at residue Lys20. Phosphoenolpyruvate-binding residues include Gly92 and Arg120. 4 residues coordinate 3-phosphoshikimate: Ser166, Gln168, Asp312, and Lys339. Gln168 lines the phosphoenolpyruvate pocket. Residue Asp312 is the Proton acceptor of the active site. Positions 343 and 385 each coordinate phosphoenolpyruvate.

The protein belongs to the EPSP synthase family. As to quaternary structure, monomer.

It localises to the cytoplasm. It catalyses the reaction 3-phosphoshikimate + phosphoenolpyruvate = 5-O-(1-carboxyvinyl)-3-phosphoshikimate + phosphate. Its pathway is metabolic intermediate biosynthesis; chorismate biosynthesis; chorismate from D-erythrose 4-phosphate and phosphoenolpyruvate: step 6/7. Catalyzes the transfer of the enolpyruvyl moiety of phosphoenolpyruvate (PEP) to the 5-hydroxyl of shikimate-3-phosphate (S3P) to produce enolpyruvyl shikimate-3-phosphate and inorganic phosphate. The protein is 3-phosphoshikimate 1-carboxyvinyltransferase of Streptococcus pyogenes serotype M49 (strain NZ131).